A 329-amino-acid polypeptide reads, in one-letter code: Glycerol-3-phosphate dehydrogenase [NAD(P)+] (329 aa).

Residues tryptophan 11, arginine 31, and lysine 105 each contribute to the NADPH site. Positions 105, 135, and 137 each coordinate sn-glycerol 3-phosphate. Alanine 139 is a binding site for NADPH. 5 residues coordinate sn-glycerol 3-phosphate: lysine 190, aspartate 243, serine 253, arginine 254, and asparagine 255. Lysine 190 acts as the Proton acceptor in catalysis. Arginine 254 is an NADPH binding site. Positions 277 and 279 each coordinate NADPH.

Belongs to the NAD-dependent glycerol-3-phosphate dehydrogenase family.

The protein localises to the cytoplasm. It carries out the reaction sn-glycerol 3-phosphate + NAD(+) = dihydroxyacetone phosphate + NADH + H(+). The catalysed reaction is sn-glycerol 3-phosphate + NADP(+) = dihydroxyacetone phosphate + NADPH + H(+). The protein operates within membrane lipid metabolism; glycerophospholipid metabolism. Catalyzes the reduction of the glycolytic intermediate dihydroxyacetone phosphate (DHAP) to sn-glycerol 3-phosphate (G3P), the key precursor for phospholipid synthesis. In Maridesulfovibrio salexigens (strain ATCC 14822 / DSM 2638 / NCIMB 8403 / VKM B-1763) (Desulfovibrio salexigens), this protein is Glycerol-3-phosphate dehydrogenase [NAD(P)+].